The sequence spans 64 residues: Alpha-like toxin Lqh6 (64 aa).

The LCN-type CS-alpha/beta domain maps to 2–63; that stretch reads RDGYIAQPEN…GIIVDGVKCH (62 aa). Intrachain disulfides connect C12-C62, C16-C34, C20-C44, and C24-C46. Position 64 is a lysine amide (K64).

The protein belongs to the long (4 C-C) scorpion toxin superfamily. Sodium channel inhibitor family. Alpha subfamily. Expressed by the venom gland.

The protein resides in the secreted. In terms of biological role, alpha toxins bind voltage-independently at site-3 of sodium channels (Nav) and inhibit the inactivation of the activated channels, thereby blocking neuronal transmission. This toxin is highly toxic to insects and mice, and inhibits the binding of alpha-toxin to cockroach neuronal membranes. The sequence is that of Alpha-like toxin Lqh6 from Leiurus hebraeus (Hebrew deathstalker scorpion).